Reading from the N-terminus, the 344-residue chain is Dihydroorotate dehydrogenase (quinone) (344 aa).

Residues 61–65 (AGLDK) and threonine 85 each bind FMN. Lysine 65 lines the substrate pocket. Substrate is bound at residue 110–114 (NRMGF). FMN-binding residues include asparagine 138 and asparagine 171. Position 171 (asparagine 171) interacts with substrate. The active-site Nucleophile is the serine 174. A substrate-binding site is contributed by asparagine 176. Residues lysine 216 and threonine 244 each contribute to the FMN site. A substrate-binding site is contributed by 245 to 246 (NT). FMN contacts are provided by residues glycine 267, glycine 296, and 317–318 (YS).

The protein belongs to the dihydroorotate dehydrogenase family. Type 2 subfamily. Monomer. It depends on FMN as a cofactor.

It is found in the cell membrane. It catalyses the reaction (S)-dihydroorotate + a quinone = orotate + a quinol. The protein operates within pyrimidine metabolism; UMP biosynthesis via de novo pathway; orotate from (S)-dihydroorotate (quinone route): step 1/1. In terms of biological role, catalyzes the conversion of dihydroorotate to orotate with quinone as electron acceptor. The sequence is that of Dihydroorotate dehydrogenase (quinone) from Psychrobacter arcticus (strain DSM 17307 / VKM B-2377 / 273-4).